Reading from the N-terminus, the 447-residue chain is Cysteine--tRNA ligase (447 aa).

Zn(2+) is bound at residue Cys-28. The 'HIGH' region motif lies at 30–40; it reads PTVYNYIHVGN. Zn(2+)-binding residues include Cys-211, His-236, and Glu-240. Residues 268–272 carry the 'KMSKS' region motif; it reads KMSKS. ATP is bound at residue Lys-271.

This sequence belongs to the class-I aminoacyl-tRNA synthetase family. As to quaternary structure, monomer. Zn(2+) is required as a cofactor.

It localises to the cytoplasm. The enzyme catalyses tRNA(Cys) + L-cysteine + ATP = L-cysteinyl-tRNA(Cys) + AMP + diphosphate. The protein is Cysteine--tRNA ligase of Streptococcus mutans serotype c (strain ATCC 700610 / UA159).